We begin with the raw amino-acid sequence, 449 residues long: CCA-adding enzyme (449 aa).

2 residues coordinate ATP: Ser-57 and Arg-60. Ser-57 and Arg-60 together coordinate CTP. The Mg(2+) site is built by Asp-69, Asp-71, and Asp-124. ATP is bound by residues His-147, Lys-167, and Tyr-176. The CTP site is built by His-147, Lys-167, and Tyr-176.

It belongs to the tRNA nucleotidyltransferase/poly(A) polymerase family. Archaeal CCA-adding enzyme subfamily. In terms of assembly, homodimer. Mg(2+) is required as a cofactor.

The enzyme catalyses a tRNA precursor + 2 CTP + ATP = a tRNA with a 3' CCA end + 3 diphosphate. It carries out the reaction a tRNA with a 3' CCA end + 2 CTP + ATP = a tRNA with a 3' CCACCA end + 3 diphosphate. Catalyzes the addition and repair of the essential 3'-terminal CCA sequence in tRNAs without using a nucleic acid template. Adds these three nucleotides in the order of C, C, and A to the tRNA nucleotide-73, using CTP and ATP as substrates and producing inorganic pyrophosphate. tRNA 3'-terminal CCA addition is required both for tRNA processing and repair. Also involved in tRNA surveillance by mediating tandem CCA addition to generate a CCACCA at the 3' terminus of unstable tRNAs. While stable tRNAs receive only 3'-terminal CCA, unstable tRNAs are marked with CCACCA and rapidly degraded. The sequence is that of CCA-adding enzyme from Methanocaldococcus jannaschii (strain ATCC 43067 / DSM 2661 / JAL-1 / JCM 10045 / NBRC 100440) (Methanococcus jannaschii).